Reading from the N-terminus, the 113-residue chain is Protein SPIRAL1-like 1 (113 aa).

Positions 1-12 (MGRGVSVGGGQS) are enriched in gly residues. The interval 1–50 (MGRGVSVGGGQSSLGYLFGSGEAPKPAINNAPAPSSETLPISADPSPKHV) is disordered. A compositionally biased stretch (low complexity) spans 23–34 (APKPAINNAPAP). Phosphoserine is present on serine 69. A disordered region spans residues 79-113 (QNTGNFLTDRPSTKVHAAPGGGSSLDYLFGGGGSN). A compositionally biased stretch (gly residues) spans 97–113 (PGGGSSLDYLFGGGGSN).

It belongs to the SPIRAL1 family. Detected in pollen of mature flowers.

Acts redundantly with SPR1 in maintaining the cortical microtubules organization essential for anisotropic cell growth. The polypeptide is Protein SPIRAL1-like 1 (SP1L1) (Arabidopsis thaliana (Mouse-ear cress)).